Reading from the N-terminus, the 422-residue chain is Hispidin-3-hydroxylase (422 aa).

A helical membrane pass occupies residues Asn-6 to Leu-26. 3 residues coordinate FAD: Ala-50, Arg-108, and Asp-318.

Belongs to the paxM FAD-dependent monooxygenase family. In terms of assembly, monomer. Requires FAD as cofactor.

It is found in the membrane. It carries out the reaction hispidin + NADH + O2 + H(+) = 3-hydroxyhispidin + NAD(+) + H2O. It catalyses the reaction hispidin + NADPH + O2 + H(+) = 3-hydroxyhispidin + NADP(+) + H2O. It functions in the pathway secondary metabolite biosynthesis. Functionally, hispidin-3-hydroxylase; part of the gene cluster that mediates the fungal bioluminescence cycle. Hydroxylates hispidin in order to produce the fungal luciferin 3-hydroxyhispidin. The fungal bioluminescence cycle begins with the hispidin synthetase that catalyzes the formation of hispidin which is further hydroxylated by the hispidin-3-hydroxylase, yielding the fungal luciferin 3-hydroxyhispidin. The luciferase then produces an endoperoxide as a high-energy intermediate with decomposition that yields oxyluciferin (also known as caffeoylpyruvate) and light emission. Oxyluciferin can be recycled to caffeic acid by caffeoylpyruvate hydrolase. This chain is Hispidin-3-hydroxylase, found in Neonothopanus nambi (Agaricus nambi).